The following is a 620-amino-acid chain: Schwann cell myelin protein (620 aa).

The first 17 residues, 1 to 17 (MELLVLTVLLMGTGCIS), serve as a signal peptide directing secretion. Over 18–516 (APWAAWMPPK…GGLVWAKVGP (499 aa)) the chain is Extracellular. Residues 28–106 (MAALSGTCVQ…RDCTLNIARL (79 aa)) form the Ig-like V-type domain. Disulfide bonds link cysteine 35/cysteine 164, cysteine 40/cysteine 99, and cysteine 158/cysteine 216. N-acetylneuraminate is bound at residue arginine 117. Ig-like C2-type domains lie at 151–233 (GSEA…DVGL), 239–322 (PQVV…LRVA), 325–407 (PRAP…FNIS), and 414–495 (VLPA…NRHG). The N-linked (GlcNAc...) asparagine glycan is linked to asparagine 222. Cysteine 260 and cysteine 304 are joined by a disulfide. Asparagine 314 and asparagine 331 each carry an N-linked (GlcNAc...) asparagine glycan. An intrachain disulfide couples cysteine 346 to cysteine 391. Residue asparagine 405 is glycosylated (N-linked (GlcNAc...) asparagine). 2 disulfide bridges follow: cysteine 420-cysteine 429 and cysteine 431-cysteine 488. Asparagine 449 carries N-linked (GlcNAc...) asparagine glycosylation. Residues 517-536 (VGAVVAFAIVIAVVCYLSQS) traverse the membrane as a helical segment. The Cytoplasmic segment spans residues 537 to 620 (RRKKGAGSPE…PPEYAEIRVK (84 aa)). Disordered regions lie at residues 539–562 (KKGAGSPEVTPVQPMAGPGGDPDL) and 583–620 (VKEGSGAPQEVTPTSHPPMKPTRGPLEDPPEYAEIRVK).

It belongs to the immunoglobulin superfamily. SIGLEC (sialic acid binding Ig-like lectin) family. As to expression, exclusively expressed by myelinating and nonmyelinating Schwann cells and oligodendrocytes.

Its subcellular location is the membrane. The polypeptide is Schwann cell myelin protein (SMP) (Coturnix japonica (Japanese quail)).